Consider the following 348-residue polypeptide: Farnesoic acid carboxyl-O-methyltransferase (348 aa).

Y16 lines the S-adenosyl-L-methionine pocket. Residues Y16 and 19–23 contribute to the substrate site; that span reads HSKYQ. Residues G57, 57-58, N63, 94-97, 123-125, and 140-142 contribute to the S-adenosyl-L-methionine site; these read GC, FNDS, SFF, and SYS. 141 to 145 contacts substrate; the sequence is YSLHF. Residues N162, D247, and F249 each coordinate Mg(2+).

This sequence belongs to the methyltransferase superfamily. SABATH family. In terms of assembly, homodimer. Requires Mg(2+) as cofactor. In terms of tissue distribution, mostly expressed in leaves and, at very low levels, in roots, stems, flowers and siliques.

The catalysed reaction is (2E,6E)-farnesoate + S-adenosyl-L-methionine = methyl (2E,6E)-farnesoate + S-adenosyl-L-homocysteine. It carries out the reaction juvenile hormone III carboxylate + S-adenosyl-L-methionine = juvenile hormone III + S-adenosyl-L-homocysteine. Its pathway is sesquiterpene biosynthesis. Its activity is regulated as follows. Activated by Mn(2+) ions. Strongly inhibited by Cu(2+), Zn(2+), Fe(3+) and Fe(2+) ions. Moderately inhibited by Na(+) and Ca(2+) ions. Rapidly degraded at temperatures above 40 degrees Celsius. May catalyze the production of the insect juvenile hormone methyl farnesoate (MeFA) to trigger defense against insect herbivory. This is Farnesoic acid carboxyl-O-methyltransferase from Arabidopsis thaliana (Mouse-ear cress).